We begin with the raw amino-acid sequence, 185 residues long: Ribosome-recycling factor (185 aa).

This sequence belongs to the RRF family.

The protein localises to the cytoplasm. Responsible for the release of ribosomes from messenger RNA at the termination of protein biosynthesis. May increase the efficiency of translation by recycling ribosomes from one round of translation to another. This is Ribosome-recycling factor from Mannheimia succiniciproducens (strain KCTC 0769BP / MBEL55E).